The chain runs to 888 residues: Valine--tRNA ligase (888 aa).

The short motif at 43 to 53 (PNVTGTLHLGH) is the 'HIGH' region element. The short motif at 538 to 542 (KMSKS) is the 'KMSKS' region element. Lysine 541 contacts ATP. Positions 821–888 (LIDLDAERAR…RLKAALGRLA (68 aa)) form a coiled coil.

This sequence belongs to the class-I aminoacyl-tRNA synthetase family. ValS type 1 subfamily. In terms of assembly, monomer.

Its subcellular location is the cytoplasm. It carries out the reaction tRNA(Val) + L-valine + ATP = L-valyl-tRNA(Val) + AMP + diphosphate. Its function is as follows. Catalyzes the attachment of valine to tRNA(Val). As ValRS can inadvertently accommodate and process structurally similar amino acids such as threonine, to avoid such errors, it has a 'posttransfer' editing activity that hydrolyzes mischarged Thr-tRNA(Val) in a tRNA-dependent manner. This Gluconobacter oxydans (strain 621H) (Gluconobacter suboxydans) protein is Valine--tRNA ligase.